The following is a 376-amino-acid chain: NifS-like protein (376 aa).

Pyridoxal 5'-phosphate-binding positions include 58–59 and 184–186; these read SE and SLN.

The protein belongs to the class-V pyridoxal-phosphate-dependent aminotransferase family. NifS/IscS subfamily. Pyridoxal 5'-phosphate serves as cofactor.

It is found in the virion. This African swine fever virus (isolate Tick/Malawi/Lil 20-1/1983) (ASFV) protein is NifS-like protein.